The primary structure comprises 500 residues: L-arabinose isomerase (500 aa).

Mn(2+) is bound by residues Glu-306, Glu-333, His-350, and His-450.

This sequence belongs to the arabinose isomerase family. In terms of assembly, homohexamer. It depends on Mn(2+) as a cofactor.

It carries out the reaction beta-L-arabinopyranose = L-ribulose. Its pathway is carbohydrate degradation; L-arabinose degradation via L-ribulose; D-xylulose 5-phosphate from L-arabinose (bacterial route): step 1/3. In terms of biological role, catalyzes the conversion of L-arabinose to L-ribulose. This is L-arabinose isomerase from Escherichia coli O6:H1 (strain CFT073 / ATCC 700928 / UPEC).